Reading from the N-terminus, the 486-residue chain is ATP synthase subunit beta (486 aa).

170–177 (GGAGVGKT) lines the ATP pocket.

Belongs to the ATPase alpha/beta chains family. As to quaternary structure, F-type ATPases have 2 components, CF(1) - the catalytic core - and CF(0) - the membrane proton channel. CF(1) has five subunits: alpha(3), beta(3), gamma(1), delta(1), epsilon(1). CF(0) has three main subunits: a(1), b(2) and c(9-12). The alpha and beta chains form an alternating ring which encloses part of the gamma chain. CF(1) is attached to CF(0) by a central stalk formed by the gamma and epsilon chains, while a peripheral stalk is formed by the delta and b chains.

Its subcellular location is the cell membrane. It carries out the reaction ATP + H2O + 4 H(+)(in) = ADP + phosphate + 5 H(+)(out). Functionally, produces ATP from ADP in the presence of a proton gradient across the membrane. The catalytic sites are hosted primarily by the beta subunits. The protein is ATP synthase subunit beta of Clavibacter sepedonicus (Clavibacter michiganensis subsp. sepedonicus).